The chain runs to 351 residues: AT-hook motif nuclear-localized protein 10 (351 aa).

The segment at 1–151 (MSGSETGLMA…RPPGSSSKRL (151 aa)) is disordered. The span at 23–37 (HQQQQHSQAQPQQSQ) shows a compositional bias: low complexity. Over residues 60 to 77 (SPPQQYQPNSAGENSVLN) the composition is skewed to polar residues. The Bipartite nuclear localization signal signature appears at 97-105 (KKRRGRPRK). DNA-binding regions (a.T hook) lie at residues 97–109 (KKRR…YGPD) and 138–149 (KKRGRPPGSSSK). A PPC domain is found at 159 to 301 (TGIGFTPHVL…QMGLSSPVLP (143 aa)). 2 stretches are compositionally biased toward polar residues: residues 310–325 (MTPS…SESS) and 334–351 (IHQS…MPWK). The segment at 310–351 (MTPSSPQSRGTMSESSCGGGHGSPIHQSTGGPYNNTINMPWK) is disordered.

The protein resides in the nucleus. Its function is as follows. Transcription factor that specifically binds AT-rich DNA sequences related to the nuclear matrix attachment regions (MARs). The polypeptide is AT-hook motif nuclear-localized protein 10 (Arabidopsis thaliana (Mouse-ear cress)).